An 852-amino-acid polypeptide reads, in one-letter code: Pentatricopeptide repeat-containing protein At5g02830, chloroplastic (852 aa).

The transit peptide at 1-25 (MRDFVIVFGSSSAITNPHHHHRRCY) directs the protein to the chloroplast. The tract at residues 17–60 (PHHHHRRCYATAPESNRKTKSNSSFTKLLPSLPQQHSPSPASVS) is disordered. Residues 44-58 (LLPSLPQQHSPSPAS) show a composition bias toward low complexity. PPR repeat units follow at residues 334-364 (DMTS…AKRM), 373-407 (DAFT…GVTP), 408-442 (NTHT…GCEP), 443-477 (NSQC…SVNE), 525-557 (TTAT…GLSP), 558-592 (NQIT…GTRP), 593-627 (DVVA…QIKP), and 628-665 (NWVT…GYKP).

The protein belongs to the PPR family. P subfamily.

The protein resides in the plastid. The protein localises to the chloroplast. This is Pentatricopeptide repeat-containing protein At5g02830, chloroplastic from Arabidopsis thaliana (Mouse-ear cress).